The following is a 315-amino-acid chain: Glutamine synthetase nodule isozyme (315 aa).

Positions 19-99 (IIAEYIWVGG…VICDTYTPSG (81 aa)) constitute a GS beta-grasp domain. Positions 106 to 315 (KRHAAAKIFS…WGVANRGASI (210 aa)) constitute a GS catalytic domain.

The protein belongs to the glutamine synthetase family. In terms of assembly, homooctamer.

The protein localises to the cytoplasm. It catalyses the reaction L-glutamate + NH4(+) + ATP = L-glutamine + ADP + phosphate + H(+). This Lupinus angustifolius (Narrow-leaved blue lupine) protein is Glutamine synthetase nodule isozyme.